The chain runs to 209 residues: Uracil phosphoribosyltransferase (209 aa).

5-phospho-alpha-D-ribose 1-diphosphate contacts are provided by residues R79, R104, and 131-139 (DPMLATGGS). Uracil-binding positions include I194 and 199-201 (GDA). D200 serves as a coordination point for 5-phospho-alpha-D-ribose 1-diphosphate.

The protein belongs to the UPRTase family. Mg(2+) is required as a cofactor.

The catalysed reaction is UMP + diphosphate = 5-phospho-alpha-D-ribose 1-diphosphate + uracil. It participates in pyrimidine metabolism; UMP biosynthesis via salvage pathway; UMP from uracil: step 1/1. With respect to regulation, allosterically activated by GTP. Its function is as follows. Catalyzes the conversion of uracil and 5-phospho-alpha-D-ribose 1-diphosphate (PRPP) to UMP and diphosphate. In Bacillus pumilus (strain SAFR-032), this protein is Uracil phosphoribosyltransferase.